The primary structure comprises 314 residues: WD repeat domain-containing protein 83 (314 aa).

WD repeat units lie at residues 23-62, 65-104, 107-146, 151-188, 189-228, 231-272, and 275-313; these read CNQGAVRAVRFNVDGNYCMTCGSDKSLKLWNPHKGSLLKT, GHGYEVLDTAGSCDNSQLCSCSSDKTVILWDVAQGQVVRK, GHAGKVNCVQFNEEATVIISGSIDSSIRCWDCRSRRPDAI, EAKDGISSVKVSAHEILAGSVDGNLRRYDLRKGEMCAD, YLGSPITCVSFSQDSQCLLASSLDSTLRLLDKDTGELLGE, GHQN…LVLK, and VGKAVVQSLSFHPTECCLLTASEGGVQVWRGASYEEEGG.

This sequence belongs to the WD repeat MORG1 family.

The protein localises to the cytoplasm. Molecular scaffold protein for various multimeric protein complexes. Acts as a module in the assembly of a multicomponent scaffold for the ERK pathway, linking ERK responses to specific agonists. Also involved in response to hypoxia by acting as a negative regulator of HIF1A/HIF-1-alpha. This Xenopus laevis (African clawed frog) protein is WD repeat domain-containing protein 83 (wdr83).